A 231-amino-acid polypeptide reads, in one-letter code: Acyl-protein thioesterase 2 (231 aa).

Cys-2 carries S-palmitoyl cysteine lipidation. Ser-82 carries the phosphoserine modification. Active-site charge relay system residues include Ser-122, Asp-176, and His-210.

Belongs to the AB hydrolase superfamily. AB hydrolase 2 family.

The protein resides in the cytoplasm. It carries out the reaction S-hexadecanoyl-L-cysteinyl-[protein] + H2O = L-cysteinyl-[protein] + hexadecanoate + H(+). The enzyme catalyses prostaglandin E2 1-glyceryl ester + H2O = prostaglandin E2 + glycerol + H(+). The catalysed reaction is 1-hexadecanoyl-sn-glycero-3-phosphocholine + H2O = sn-glycerol 3-phosphocholine + hexadecanoate + H(+). It catalyses the reaction 1-octadecanoyl-sn-glycero-3-phosphocholine + H2O = octadecanoate + sn-glycerol 3-phosphocholine + H(+). It carries out the reaction 1-hexadecanoyl-sn-glycero-3-phosphate + H2O = sn-glycerol 3-phosphate + hexadecanoate + H(+). The enzyme catalyses 1-hexadecanoyl-sn-glycero-3-phospho-L-serine + H2O = sn-glycero-3-phospho-L-serine + hexadecanoate + H(+). In terms of biological role, acts as an acyl-protein thioesterase hydrolyzing fatty acids from S-acylated cysteine residues in proteins such as trimeric G alpha proteins, GSDMD, GAP43, ZDHHC6 or HRAS. Deacylates GAP43. Mediates depalmitoylation of ZDHHC6. Has lysophospholipase activity. Hydrolyzes prostaglandin glycerol esters (PG-Gs) in the following order prostaglandin D2-glycerol ester (PGD2-G) &gt; prostaglandin E2 glycerol ester (PGE2-G) &gt; prostaglandin F2-alpha-glycerol ester (PGF2-alpha-G). Hydrolyzes 1-arachidonoylglycerol but not 2-arachidonoylglycerol or arachidonoylethanolamide. This chain is Acyl-protein thioesterase 2 (Lypla2), found in Rattus norvegicus (Rat).